Consider the following 201-residue polypeptide: MSRYRGPRFKKIRRLGALPGLTSKRPKAGSDLRNQSRSVKKSQYRIRLEEKQKLRFHYGLTERQLLKYVRIAGKAKGSTGQVLLQLLEMRLDNILFRLGMALTIPQARQLVNHGHILVNGRIVDIPSYRCKPRDIITVKDEQNSRTLVQNLLDSSAPEELPNHLTLHTFQYEGLVNQIIDRKCVGLKINELLVVEYYSRQT.

In terms of domain architecture, S4 RNA-binding spans 89-152; the sequence is MRLDNILFRL…NSRTLVQNLL (64 aa).

This sequence belongs to the universal ribosomal protein uS4 family. In terms of assembly, part of the 30S ribosomal subunit. Contacts protein S5. The interaction surface between S4 and S5 is involved in control of translational fidelity.

The protein resides in the plastid. It localises to the chloroplast. Functionally, one of the primary rRNA binding proteins, it binds directly to 16S rRNA where it nucleates assembly of the body of the 30S subunit. In terms of biological role, with S5 and S12 plays an important role in translational accuracy. The sequence is that of Small ribosomal subunit protein uS4c (rps4) from Capsella bursa-pastoris (Shepherd's purse).